A 467-amino-acid polypeptide reads, in one-letter code: Ribosome biogenesis protein YTM1 (467 aa).

The segment at 8–95 (IKIKFFTNEE…ETFLSLEYTR (88 aa)) is ubiquitin-like (UBL) domain. Positions 105-467 (SFNNEDWISS…QINKGSDISK (363 aa)) are sufficient for interaction with ERB1 and association with 66S pre-ribosomes. WD repeat units lie at residues 120–159 (KTLPSVTLSNMMISQPKILSGSYDGIVRTYNMSGNVEKQY), 161–199 (GHSGPIRAVKWVSPTRIVSAGNDRQVRLWKTSADDGSIP), 216–255 (GHKAPVVALAVENTSNRILSAGYDHSIGFWSTNYKEMTTI), 293–333 (SHTQ…CIDT), 335–374 (STGYSLLSIVQLPKSKLLATGSSARHINLHDPRISNNTTE), 382–422 (GHTN…SLYT), and 432–467 (KGADKVFAVSWDNEIGIISGGQDKKIQINKGSDISK).

Belongs to the WD repeat WDR12/YTM1 family. Component of the NOP7 complex, composed of ERB1, NOP7 and YTM1. The complex is held together by ERB1, which interacts with NOP7 via its N-terminal domain and with YTM1 via a high-affinity interaction between the seven-bladed beta-propeller domains of the 2 proteins. The NOP7 complex associates with the 66S pre-ribosome. Interacts (via UBL domain) with MDN1 (via VWFA/MIDAS domain).

The protein localises to the nucleus. Its subcellular location is the nucleolus. It localises to the nucleoplasm. Its function is as follows. Component of the NOP7 complex, which is required for maturation of the 25S and 5.8S ribosomal RNAs and formation of the 60S ribosome. The sequence is that of Ribosome biogenesis protein YTM1 from Scheffersomyces stipitis (strain ATCC 58785 / CBS 6054 / NBRC 10063 / NRRL Y-11545) (Yeast).